Consider the following 330-residue polypeptide: tRNA-modifying protein YgfZ (330 aa).

Folate contacts are provided by tryptophan 28 and tryptophan 190.

The protein belongs to the tRNA-modifying YgfZ family.

The protein localises to the cytoplasm. Folate-binding protein involved in regulating the level of ATP-DnaA and in the modification of some tRNAs. It is probably a key factor in regulatory networks that act via tRNA modification, such as initiation of chromosomal replication. The sequence is that of tRNA-modifying protein YgfZ from Yersinia pseudotuberculosis serotype IB (strain PB1/+).